The following is a 483-amino-acid chain: Zinc finger CCCH domain-containing protein 25 (483 aa).

Residues 157-184 form a C3H1-type zinc finger; sequence RNRAHICSFFIRGECTRGDECPYRHEMP. In terms of domain architecture, RRM spans 228 to 301; sequence RTLYVGGLNS…QRLKLTWGRP (74 aa). Disordered regions lie at residues 298–317 and 336–483; these read WGRP…QGSV and PPML…GSSQ. A compositionally biased stretch (pro residues) spans 336–351; the sequence is PPMLQYYMHPPPPQPP. The span at 370–380 shows a compositional bias: low complexity; it reads SSSKESGSSTS. The span at 381–391 shows a compositional bias: polar residues; that stretch reads DNRGASSSSYT. 2 stretches are compositionally biased toward low complexity: residues 392 to 401 and 409 to 423; these read MPPHGHYPQH and YGGY…YPPY. The span at 438–459 shows a compositional bias: pro residues; that stretch reads QPGPGSRPNPPHPSSVSAPPPD. Residues 460–476 are compositionally biased toward low complexity; the sequence is SVSAAPSGSSQQSADAA.

The protein is Zinc finger CCCH domain-containing protein 25 of Arabidopsis thaliana (Mouse-ear cress).